Here is a 229-residue protein sequence, read N- to C-terminus: Large ribosomal subunit protein uL1 (229 aa).

This sequence belongs to the universal ribosomal protein uL1 family. As to quaternary structure, part of the 50S ribosomal subunit.

In terms of biological role, binds directly to 23S rRNA. The L1 stalk is quite mobile in the ribosome, and is involved in E site tRNA release. Functionally, protein L1 is also a translational repressor protein, it controls the translation of the L11 operon by binding to its mRNA. This chain is Large ribosomal subunit protein uL1, found in Haemophilus influenzae (strain 86-028NP).